Here is a 921-residue protein sequence, read N- to C-terminus: Collagen alpha-1(IX) chain (921 aa).

The signal sequence occupies residues 1 to 23; it reads MKNFWKISVFFCVCSCLGPWVSA. A nonhelical region (NC4) region spans residues 24-268; that stretch reads TLKRRARFPA…ITTSQTTDER (245 aa). Intrachain disulfides connect Cys44–Cys242 and Cys198–Cys252. Residues 50-244 form the Laminin G-like domain; it reads GQDDLPGFDL…LQWMLIHCDP (195 aa). The Zn(2+) site is built by Asp213, Asp215, and His253. 2 disordered regions span residues 253–759 and 783–921; these read HELP…APTD and RPDT…GPDK. Collagen-like domains are found at residues 269-325, 326-356, 358-403, 416-472, 473-512, 604-656, 657-711, and 712-755; these read GPPG…PGAD, GLTG…GFPG, GIPG…GTIG, PPGR…GLRG, ITGI…PPGE, GKPG…LPGP, PGLP…PGEP, and GLRG…PPGR. Positions 269-405 are triple-helical region (COL3); that stretch reads GPPGEQGPPG…PGPSGTIGFH (137 aa). Pro residues-rich tracts occupy residues 273-285 and 298-310; these read EQGP…PPGV and KGPP…PGDP. Residues 368-383 are compositionally biased toward low complexity; that stretch reads TTGLPGELGRVGPIGD. A compositionally biased stretch (pro residues) spans 387-398; that stretch reads RGPPGPPGPPGP. Residues 406–417 form a nonhelical region (NC3) region; the sequence is DGDPLCPNSCPP. Residues 418-756 form a triple-helical region (COL2) region; that stretch reads GRSGYPGLPG…PGIQGPPGRA (339 aa). A compositionally biased stretch (basic and acidic residues) spans 479–489; that stretch reads DKGEKGARGFD. Composition is skewed to low complexity over residues 594 to 632 and 639 to 650; these read PGKP…PVGP and PGKLGSVGSPGL. The tract at residues 757–786 is nonhelical region (NC2); it reads PTDQHIKQVCMRVVQEHFVEMAASLKRPDT. Residues 787–901 are triple-helical region (COL1); sequence GASGLPGRPG…PGPPGPPGFC (115 aa). Positions 790 to 847 constitute a Collagen-like 9 domain; it reads GLPGRPGPPGPPGPPGENGFPGQMGIRGLPGIKGPPGALGLRGPKGDLGEKGERGPPG. Positions 794–804 are enriched in pro residues; it reads RPGPPGPPGPP. The span at 833–845 shows a compositional bias: basic and acidic residues; that stretch reads PKGDLGEKGERGP. The segment covering 888–900 has biased composition (pro residues); that stretch reads VPGPPGPPGPPGF. Positions 902–921 are nonhelical region (NC1); that stretch reads EPASCTLQSGQRAFSKGPDK.

Belongs to the fibril-associated collagens with interrupted helices (FACIT) family. In terms of assembly, heterotrimer of an alpha 1(IX), an alpha 2(IX) and an alpha 3(IX) chain. Post-translationally, covalently linked to the telopeptides of type II collagen by lysine-derived cross-links. In terms of processing, prolines at the third position of the tripeptide repeating unit (G-X-Y) are hydroxylated in some or all of the chains.

It is found in the secreted. The protein resides in the extracellular space. The protein localises to the extracellular matrix. In terms of biological role, structural component of hyaline cartilage and vitreous of the eye. In Mus musculus (Mouse), this protein is Collagen alpha-1(IX) chain (Col9a1).